We begin with the raw amino-acid sequence, 130 residues long: Small ribosomal subunit protein uS8 (130 aa).

The protein belongs to the universal ribosomal protein uS8 family. As to quaternary structure, part of the 30S ribosomal subunit. Contacts proteins S5 and S12.

Functionally, one of the primary rRNA binding proteins, it binds directly to 16S rRNA central domain where it helps coordinate assembly of the platform of the 30S subunit. In Moorella thermoacetica (strain ATCC 39073 / JCM 9320), this protein is Small ribosomal subunit protein uS8.